Consider the following 266-residue polypeptide: Putative carbamate hydrolase RutD (266 aa).

This sequence belongs to the AB hydrolase superfamily. Hydrolase RutD family.

The catalysed reaction is carbamate + 2 H(+) = NH4(+) + CO2. Its function is as follows. Involved in pyrimidine catabolism. May facilitate the hydrolysis of carbamate, a reaction that can also occur spontaneously. This Escherichia coli O111:H- (strain 11128 / EHEC) protein is Putative carbamate hydrolase RutD.